We begin with the raw amino-acid sequence, 308 residues long: MAASWQWENATAGAVAGFATVAAMHSLDVVRTRFQVNDGRGSSLPTYKNTAHAVFTIARLEGLRGLYAGFFPAVIGSTVSWGLYFFFYGRAKQRYARGRDDEKLSPALHLASAAEAGALVCLCTNPIWLVKTRLQLQTPLHQTQPYSGLLDAFRTIVKEEGPRALYKGIVPGLVLVSHGAIQFTAYEELRKIIVDLKERRRKSESTDNLLNSADYAALGGSSKVAAVLLTYPFQVIRARLQQRPSTNGIPRYIDSLHVIRETARYEGLRGFYRGLTANLLKNVPASSITFIVYENVLKLLKQHPTTKD.

Solcar repeat units follow at residues 4 to 94, 104 to 192, and 213 to 299; these read SWQW…AKQR, LSPA…LRKI, and ADYA…VLKL. 6 helical membrane passes run 10-30, 74-91, 110-130, 164-184, 216-236, and 274-293; these read ATAG…LDVV, VIGS…YGRA, LASA…IWLV, ALYK…IQFT, AALG…FQVI, and GLTA…FIVY.

Belongs to the mitochondrial carrier (TC 2.A.29) family. In terms of tissue distribution, ubiquitous.

The protein resides in the plastid. The protein localises to the chloroplast membrane. Its function is as follows. Mediates folate import into chloroplast. In Arabidopsis thaliana (Mouse-ear cress), this protein is Folate transporter 1, chloroplastic (FOLT1).